The following is a 440-amino-acid chain: C4-dicarboxylate TRAP transporter large permease protein DctM (440 aa).

Helical transmembrane passes span 4-24 (LIIF…SISL), 54-74 (FEIM…HGGV), 89-109 (WHGG…AVSG), 112-132 (PATV…QGFP), 148-168 (ILIP…GMVV), 181-201 (VGEL…FLAF), 230-250 (AAWG…GIFT), 255-275 (AAMS…DLTL), 291-311 (MLLY…HEGI), 318-338 (WMVN…ILLL), 349-369 (IVLI…IDPV), 370-390 (HFGI…PVGL), and 410-430 (VWPW…VPAI).

The protein belongs to the TRAP transporter large permease family. The complex comprises the extracytoplasmic solute receptor protein DctP, and the two transmembrane proteins DctQ and DctM.

The protein resides in the cell inner membrane. Part of the tripartite ATP-independent periplasmic (TRAP) transport system DctPQM involved in C4-dicarboxylates uptake. This chain is C4-dicarboxylate TRAP transporter large permease protein DctM, found in Rhodobacter capsulatus (Rhodopseudomonas capsulata).